A 151-amino-acid chain; its full sequence is Copper transporter 2 (151 aa).

2 helical membrane-spanning segments follow: residues 42 to 62 (GARG…AVLL) and 97 to 117 (VAYL…LAIV).

This sequence belongs to the copper transporter (Ctr) (TC 1.A.56) family. SLC31A subfamily. Self-interacts. Interacts with SWEET11 and COPT1.

The protein resides in the cell membrane. In terms of biological role, involved in the transport of copper, in cooperation with SWEET11 and COPT1. Contributes to the removal of copper (Cu) from xylem, and thus to the sensitivity toward bacterial pathogens such as X.oryzae pv. oryzae (Xoo). This is Copper transporter 2 (COPT2) from Oryza sativa subsp. japonica (Rice).